Consider the following 270-residue polypeptide: tRNA pseudouridine synthase A (270 aa).

The active-site Nucleophile is the Asp60. The RNA binding stretch occupies residues 107–111 (FHARF). Position 118 (Tyr118) interacts with substrate. An interaction with tRNA region spans residues 168 to 172 (QCQSR).

Belongs to the tRNA pseudouridine synthase TruA family. Homodimer.

The enzyme catalyses uridine(38/39/40) in tRNA = pseudouridine(38/39/40) in tRNA. Formation of pseudouridine at positions 38, 39 and 40 in the anticodon stem and loop of transfer RNAs. The polypeptide is tRNA pseudouridine synthase A (Klebsiella pneumoniae (strain 342)).